The sequence spans 37 residues: uncharacterized protein (37 aa).

A helical transmembrane segment spans residues T13–L33.

Its subcellular location is the host membrane. This is an uncharacterized protein from Acidianus convivator (ABV).